Consider the following 571-residue polypeptide: Proline--tRNA ligase (571 aa).

It belongs to the class-II aminoacyl-tRNA synthetase family. ProS type 1 subfamily. In terms of assembly, homodimer.

The protein resides in the cytoplasm. It carries out the reaction tRNA(Pro) + L-proline + ATP = L-prolyl-tRNA(Pro) + AMP + diphosphate. Functionally, catalyzes the attachment of proline to tRNA(Pro) in a two-step reaction: proline is first activated by ATP to form Pro-AMP and then transferred to the acceptor end of tRNA(Pro). As ProRS can inadvertently accommodate and process non-cognate amino acids such as alanine and cysteine, to avoid such errors it has two additional distinct editing activities against alanine. One activity is designated as 'pretransfer' editing and involves the tRNA(Pro)-independent hydrolysis of activated Ala-AMP. The other activity is designated 'posttransfer' editing and involves deacylation of mischarged Ala-tRNA(Pro). The misacylated Cys-tRNA(Pro) is not edited by ProRS. This Acinetobacter baumannii (strain AB307-0294) protein is Proline--tRNA ligase.